We begin with the raw amino-acid sequence, 451 residues long: Zinc metalloproteinase nas-16 (451 aa).

One can recognise a Peptidase M12A domain in the interval 70 to 273 (QVVTKLFSPQ…LTINTAYNCK (204 aa)). Cystine bridges form between Cys-127-Cys-272, Cys-148-Cys-167, Cys-274-Cys-291, and Cys-296-Cys-305. Residue Asn-133 is glycosylated (N-linked (GlcNAc...) asparagine). His-175 provides a ligand contact to Zn(2+). Glu-176 is an active-site residue. His-179 and His-185 together coordinate Zn(2+). An EGF-like domain is found at 267–306 (NTAYNCKCPSELLCANGGYTNPSNCLECICPLGYGGVLCD). N-linked (GlcNAc...) asparagine glycosylation is found at Asn-363 and Asn-438.

Zn(2+) serves as cofactor.

Its subcellular location is the secreted. Metalloprotease. The protein is Zinc metalloproteinase nas-16 (nas-16) of Caenorhabditis elegans.